The primary structure comprises 313 residues: Carbamate kinase 2 (313 aa).

The protein belongs to the carbamate kinase family.

The protein resides in the cytoplasm. It carries out the reaction hydrogencarbonate + NH4(+) + ATP = carbamoyl phosphate + ADP + H2O + H(+). The protein operates within metabolic intermediate metabolism; carbamoyl phosphate degradation; CO(2) and NH(3) from carbamoyl phosphate: step 1/1. The polypeptide is Carbamate kinase 2 (arcC2) (Staphylococcus aureus (strain bovine RF122 / ET3-1)).